The chain runs to 66 residues: Ocellatin-PT2 (66 aa).

The signal sequence occupies residues 1 to 22 (MAFLKKSLFLVLFLGLVSLSIC). The propeptide occupies 23–39 (DEEKRQDEDDDDDDDEE). The residue at position 66 (valine 66) is a Valine amide.

In terms of tissue distribution, expressed by the skin glands.

It is found in the secreted. In terms of biological role, has no antibacterial activity against Gram-negative bacteria E.coli ATCC 25922, S.pneumoniae ATCC 700603 and S.choleraesuis ATCC 14028 or against Gram-positive bacterium S.aureus ATCC 29313. Shows no hemolytic activity and no cytotoxicity. In Leptodactylus pustulatus (Ceara white-lipped frog), this protein is Ocellatin-PT2.